A 250-amino-acid polypeptide reads, in one-letter code: FAS1 domain-containing protein AER383W (250 aa).

The first 18 residues, 1–18, serve as a signal peptide directing secretion; it reads MRLKTILLGFCAFHVARS. Residues 87-247 enclose the FAS1 domain; that stretch reads GVTLDDRLQS…GIVLVIDSSL (161 aa).

The protein resides in the vacuole. This chain is FAS1 domain-containing protein AER383W, found in Eremothecium gossypii (strain ATCC 10895 / CBS 109.51 / FGSC 9923 / NRRL Y-1056) (Yeast).